Here is a 123-residue protein sequence, read N- to C-terminus: Transmembrane protein 049L (123 aa).

A run of 2 helical transmembrane segments spans residues 67-87 (VFGALCVAFGIMLIGFLLWLV) and 104-121 (LSLQQMVFLITTCIGVYN).

The protein resides in the membrane. The sequence is that of Transmembrane protein 049L from Acheta domesticus (House cricket).